The primary structure comprises 193 residues: Large ribosomal subunit protein bL9 (193 aa).

The segment at 155 to 193 is disordered; the sequence is AEGETLTSAEAIYDIQEKPLAENQEEMNDNDANSINEQA. Residues 184 to 193 show a composition bias toward polar residues; sequence NDANSINEQA.

The protein belongs to the bacterial ribosomal protein bL9 family.

In terms of biological role, binds to the 23S rRNA. In Bartonella quintana (strain Toulouse) (Rochalimaea quintana), this protein is Large ribosomal subunit protein bL9.